A 542-amino-acid polypeptide reads, in one-letter code: Chaperonin GroEL 5 (542 aa).

ATP-binding positions include 30 to 33 (TLGP), Lys51, 87 to 91 (DGTTT), Gly415, and Asp496.

It belongs to the chaperonin (HSP60) family. In terms of assembly, forms a cylinder of 14 subunits composed of two heptameric rings stacked back-to-back. Interacts with the co-chaperonin GroES.

It localises to the cytoplasm. It carries out the reaction ATP + H2O + a folded polypeptide = ADP + phosphate + an unfolded polypeptide.. Functionally, together with its co-chaperonin GroES, plays an essential role in assisting protein folding. The GroEL-GroES system forms a nano-cage that allows encapsulation of the non-native substrate proteins and provides a physical environment optimized to promote and accelerate protein folding. The sequence is that of Chaperonin GroEL 5 from Rhizobium meliloti (strain 1021) (Ensifer meliloti).